We begin with the raw amino-acid sequence, 405 residues long: Enoyl-[acyl-carrier-protein] reductase [NADH] (405 aa).

NAD(+) is bound by residues 48-53 (GASSGY), 74-75 (FE), 111-112 (DA), and 140-141 (LA). Residue Tyr226 coordinates substrate. The active-site Proton donor is the Tyr236. NAD(+)-binding positions include Lys245 and 274–276 (VVT).

Belongs to the TER reductase family. As to quaternary structure, monomer.

It carries out the reaction a 2,3-saturated acyl-[ACP] + NAD(+) = a (2E)-enoyl-[ACP] + NADH + H(+). The protein operates within lipid metabolism; fatty acid biosynthesis. Involved in the final reduction of the elongation cycle of fatty acid synthesis (FAS II). Catalyzes the reduction of a carbon-carbon double bond in an enoyl moiety that is covalently linked to an acyl carrier protein (ACP). The chain is Enoyl-[acyl-carrier-protein] reductase [NADH] from Xanthomonas oryzae pv. oryzae (strain PXO99A).